We begin with the raw amino-acid sequence, 132 residues long: Gonadotropin subunit beta-1 (132 aa).

Positions 1-17 are cleaved as a signal peptide; that stretch reads MMRGVTMVLLLPMLVWA. 5 cysteine pairs are disulfide-bonded: cysteine 25-cysteine 73, cysteine 39-cysteine 88, cysteine 50-cysteine 104, cysteine 54-cysteine 106, and cysteine 109-cysteine 116. N-linked (GlcNAc...) asparagine glycosylation is found at asparagine 29 and asparagine 46.

The protein belongs to the glycoprotein hormones subunit beta family. Heterodimer of an alpha and a beta chain.

It localises to the secreted. Involved in gametogenesis and steroidogenesis. The protein is Gonadotropin subunit beta-1 (cgba) of Ictalurus punctatus (Channel catfish).